A 338-amino-acid polypeptide reads, in one-letter code: 1-aminocyclopropane-1-carboxylate deaminase (338 aa).

Lys51 is subject to N6-(pyridoxal phosphate)lysine. The active-site Nucleophile is the Ser78.

This sequence belongs to the ACC deaminase/D-cysteine desulfhydrase family. As to quaternary structure, homotrimer. Requires pyridoxal 5'-phosphate as cofactor.

The catalysed reaction is 1-aminocyclopropane-1-carboxylate + H2O = 2-oxobutanoate + NH4(+). Its function is as follows. Catalyzes a cyclopropane ring-opening reaction, the irreversible conversion of 1-aminocyclopropane-1-carboxylate (ACC) to ammonia and alpha-ketobutyrate. Allows growth on ACC as a nitrogen source. This Burkholderia vietnamiensis (strain G4 / LMG 22486) (Burkholderia cepacia (strain R1808)) protein is 1-aminocyclopropane-1-carboxylate deaminase.